We begin with the raw amino-acid sequence, 122 residues long: Ribosome-binding factor A (122 aa).

It belongs to the RbfA family. Monomer. Binds 30S ribosomal subunits, but not 50S ribosomal subunits or 70S ribosomes.

The protein localises to the cytoplasm. In terms of biological role, one of several proteins that assist in the late maturation steps of the functional core of the 30S ribosomal subunit. Associates with free 30S ribosomal subunits (but not with 30S subunits that are part of 70S ribosomes or polysomes). Required for efficient processing of 16S rRNA. May interact with the 5'-terminal helix region of 16S rRNA. The sequence is that of Ribosome-binding factor A from Polynucleobacter necessarius subsp. necessarius (strain STIR1).